A 177-amino-acid chain; its full sequence is Peptide methionine sulfoxide reductase MsrA (177 aa).

The active site involves Cys14.

Belongs to the MsrA Met sulfoxide reductase family.

The catalysed reaction is L-methionyl-[protein] + [thioredoxin]-disulfide + H2O = L-methionyl-(S)-S-oxide-[protein] + [thioredoxin]-dithiol. It carries out the reaction [thioredoxin]-disulfide + L-methionine + H2O = L-methionine (S)-S-oxide + [thioredoxin]-dithiol. Its function is as follows. Has an important function as a repair enzyme for proteins that have been inactivated by oxidation. Catalyzes the reversible oxidation-reduction of methionine sulfoxide in proteins to methionine. In Bacillus velezensis (strain DSM 23117 / BGSC 10A6 / LMG 26770 / FZB42) (Bacillus amyloliquefaciens subsp. plantarum), this protein is Peptide methionine sulfoxide reductase MsrA.